The sequence spans 99 residues: Putative endopeptidase RzpR (99 aa).

The sequence is that of Putative endopeptidase RzpR (rzpR) from Escherichia coli (strain K12).